The primary structure comprises 753 residues: 5-methyltetrahydropteroyltriglutamate--homocysteine methyltransferase (753 aa).

5-methyltetrahydropteroyltri-L-glutamate is bound by residues 17–20 (RELK) and Lys-117. L-homocysteine-binding positions include 431–433 (IGS) and Glu-484. L-methionine-binding positions include 431 to 433 (IGS) and Glu-484. 5-methyltetrahydropteroyltri-L-glutamate-binding positions include 515–516 (RC) and Trp-561. Asp-599 lines the L-homocysteine pocket. Asp-599 lines the L-methionine pocket. Position 605 (Glu-605) interacts with 5-methyltetrahydropteroyltri-L-glutamate. His-641, Cys-643, and Glu-665 together coordinate Zn(2+). His-694 functions as the Proton donor in the catalytic mechanism. Cys-726 is a binding site for Zn(2+).

It belongs to the vitamin-B12 independent methionine synthase family. The cofactor is Zn(2+).

The catalysed reaction is 5-methyltetrahydropteroyltri-L-glutamate + L-homocysteine = tetrahydropteroyltri-L-glutamate + L-methionine. It participates in amino-acid biosynthesis; L-methionine biosynthesis via de novo pathway; L-methionine from L-homocysteine (MetE route): step 1/1. In terms of biological role, catalyzes the transfer of a methyl group from 5-methyltetrahydrofolate to homocysteine resulting in methionine formation. This chain is 5-methyltetrahydropteroyltriglutamate--homocysteine methyltransferase, found in Enterobacter sp. (strain 638).